The following is a 321-amino-acid chain: Probable nucleosome assembly protein (321 aa).

Residues 272–298 are compositionally biased toward acidic residues; it reads EENDYDFGEDFEDEEGEDDDEEDDEEE. Residues 272-321 are disordered; it reads EENDYDFGEDFEDEEGEDDDEEDDEEEQTIKKPSGKGKAQPQQPQDCKQQ. The span at 311 to 321 shows a compositional bias: low complexity; it reads QPQQPQDCKQQ.

This sequence belongs to the nucleosome assembly protein (NAP) family.

It localises to the nucleus. Functionally, may modulate chromatin structure by regulation of histone octamer formation. In Dictyostelium discoideum (Social amoeba), this protein is Probable nucleosome assembly protein (nap1).